The sequence spans 1393 residues: Protein strawberry notch homolog 1 (1393 aa).

The disordered stretch occupies residues 129–148 (STRPSVSAPTVRNAMTSAPS). S148 bears the Phosphoserine mark. Position 149 is an N6-acetyllysine (K149). Residues S162 and S214 each carry the phosphoserine modification. At K413 the chain carries N6-acetyllysine. The interval 687–840 (APSNNSSPRD…ANSNTNSNSS (154 aa)) is disordered. Residues S692, S693, and S697 each carry the phosphoserine modification. The span at 697 to 716 (SPCKENKIKKRKGEEITREA) shows a compositional bias: basic and acidic residues. Residues 733–747 (SGSESDASDNEESDY) are compositionally biased toward acidic residues. S754, S755, and S768 each carry phosphoserine. The span at 756 to 775 (GDDDDFNPFLDESNEDDEND) shows a compositional bias: acidic residues. Positions 781 to 793 (KDHKKNKEKKKKK) are enriched in basic residues. 2 positions are modified to phosphoserine: S794 and S815. Over residues 824-840 (PAPNSTPANSNTNSNSS) the composition is skewed to low complexity. A coiled-coil region spans residues 843–870 (TSQDAVERAQQMKKDLLDKLEKLAEDLP). Position 1222 is an N6-acetyllysine (K1222). S1386 carries the post-translational modification Phosphoserine.

The protein belongs to the SBNO family.

It is found in the nucleus. Functionally, plays a crucial role in the regulation of neural stem cells (NSCs) proliferation. Enhances the phosphorylation of GSK3B through the PI3K-Akt signaling pathway, thereby upregulating the Wnt/beta-catenin signaling pathway and promoting the proliferation of NSCs. Improves ischemic stroke recovery while inhibiting neuroinflammation through small extracellular vesicles (sEVs)-mediated mechanism. Enhances the secretion of sEVs from NSCs, which in turn inhibit both the MAPK and NF-kappaB pathways in microglia. This inhibition suppresses the pro-inflammatory M1 polarization of microglia, promoting a shift towards the M2 anti-inflammatory phenotype, which is beneficial for reducing neuroinflammation. The chain is Protein strawberry notch homolog 1 (SBNO1) from Homo sapiens (Human).